A 746-amino-acid polypeptide reads, in one-letter code: Centromere protein I (746 aa).

A disordered region spans residues 1–24 (MATQRVTRNSQQQNRISQGSNSRQ).

This sequence belongs to the CENP-I/CTF3 family. In terms of assembly, component of the CENPA-CAD complex, composed of CENPI, CENPK, CENPL, CENPO, CENPP, CENPQ, CENPR and CENPS. The CENPA-CAD complex interacts with the CENPA-NAC complex, at least composed of CENPA, CENPC, CENPH, CENPM, CENPN, CENPT and CENPU. Interacts with SENP6. In terms of processing, sumoylated. Sumoylated form can be polyubiquitinated by RNF4, leading to its degradation. Desumoylation by SENP6 prevents its degradation.

Its subcellular location is the nucleus. The protein resides in the chromosome. It is found in the centromere. In terms of biological role, component of the CENPA-CAD (nucleosome distal) complex, a complex recruited to centromeres which is involved in assembly of kinetochore proteins, mitotic progression and chromosome segregation. May be involved in incorporation of newly synthesized CENPA into centromeres via its interaction with the CENPA-NAC complex. Required for the localization of CENPF, MAD1L1 and MAD2 (MAD2L1 or MAD2L2) to kinetochores. Involved in the response of gonadal tissues to follicle-stimulating hormone. This is Centromere protein I (Cenpi) from Mus musculus (Mouse).